Reading from the N-terminus, the 437-residue chain is Cobyrinate a,c-diamide synthase (437 aa).

Residues 243-433 (IAAIAYDSAF…SHFHFSSARG (191 aa)) enclose the GATase cobBQ-type domain. Cysteine 324 functions as the Nucleophile in the catalytic mechanism.

The protein belongs to the CobB/CbiA family. The cofactor is Mg(2+).

The catalysed reaction is cob(II)yrinate + 2 L-glutamine + 2 ATP + 2 H2O = cob(II)yrinate a,c diamide + 2 L-glutamate + 2 ADP + 2 phosphate + 2 H(+). Its pathway is cofactor biosynthesis; adenosylcobalamin biosynthesis; cob(II)yrinate a,c-diamide from sirohydrochlorin (anaerobic route): step 10/10. In terms of biological role, catalyzes the ATP-dependent amidation of the two carboxylate groups at positions a and c of cobyrinate, using either L-glutamine or ammonia as the nitrogen source. The sequence is that of Cobyrinate a,c-diamide synthase from Sulfurisphaera tokodaii (strain DSM 16993 / JCM 10545 / NBRC 100140 / 7) (Sulfolobus tokodaii).